A 239-amino-acid chain; its full sequence is Large ribosomal subunit protein uL1 (239 aa).

Belongs to the universal ribosomal protein uL1 family. In terms of assembly, part of the 50S ribosomal subunit.

Functionally, binds directly to 23S rRNA. The L1 stalk is quite mobile in the ribosome, and is involved in E site tRNA release. Its function is as follows. Protein L1 is also a translational repressor protein, it controls the translation of the L11 operon by binding to its mRNA. This Mycolicibacterium gilvum (strain PYR-GCK) (Mycobacterium gilvum (strain PYR-GCK)) protein is Large ribosomal subunit protein uL1.